Reading from the N-terminus, the 597-residue chain is Elongation factor 4 (597 aa).

The tr-type G domain occupies 2 to 184 (QHIRNFSIIA…AIVARVPSPE (183 aa)). Residues 14–19 (DHGKST) and 131–134 (NKMD) each bind GTP.

The protein belongs to the TRAFAC class translation factor GTPase superfamily. Classic translation factor GTPase family. LepA subfamily.

The protein localises to the cell inner membrane. It carries out the reaction GTP + H2O = GDP + phosphate + H(+). Functionally, required for accurate and efficient protein synthesis under certain stress conditions. May act as a fidelity factor of the translation reaction, by catalyzing a one-codon backward translocation of tRNAs on improperly translocated ribosomes. Back-translocation proceeds from a post-translocation (POST) complex to a pre-translocation (PRE) complex, thus giving elongation factor G a second chance to translocate the tRNAs correctly. Binds to ribosomes in a GTP-dependent manner. The sequence is that of Elongation factor 4 from Bordetella avium (strain 197N).